Here is a 1049-residue protein sequence, read N- to C-terminus: Dyslexia-associated protein KIAA0319-like protein (1049 aa).

Over Met1 to Arg29 the chain is Cytoplasmic. Residues Ser30–Ser50 form a helical membrane-spanning segment. In terms of domain architecture, MANSC spans Ala49–Met127. Residues Glu51–Tyr932 are Extracellular-facing. Asn247, Asn395, Asn472, Asn487, and Asn525 each carry an N-linked (GlcNAc...) asparagine glycan. 5 consecutive PKD domains span residues Ser312–Glu401, Ile409–Ala498, Val504–Glu594, Gln600–Glu688, and Ile694–Asp785. A helical transmembrane segment spans residues Val933–Cys953. Topologically, residues Cys954–Leu1049 are cytoplasmic. Position 974 is a phosphothreonine (Thr974). Residues Ser978, Ser1009, and Ser1031 each carry the phosphoserine modification. The tract at residues Gly1022–Leu1049 is disordered. A compositionally biased stretch (polar residues) spans Gln1028 to Thr1037. Position 1037 is a phosphothreonine (Thr1037).

As to quaternary structure, interacts with RTN4R. (Microbial infection) Interacts with AAV-2 VP1. Post-translationally, N-glycosylated. Expressed in cortical neurons in the brain cortex (at protein level).

The protein localises to the cytoplasmic granule membrane. It localises to the golgi apparatus membrane. The protein resides in the golgi apparatus. Its subcellular location is the trans-Golgi network membrane. It is found in the cell membrane. Functionally, possible role in axon guidance through interaction with RTN4R. Its function is as follows. (Microbial infection) Acts as a receptor for adeno-associated virus and is involved in adeno-associated virus infection through endocytosis system. This is Dyslexia-associated protein KIAA0319-like protein from Homo sapiens (Human).